A 583-amino-acid polypeptide reads, in one-letter code: Trehalase (583 aa).

An N-terminal signal peptide occupies residues 1-23 (MPGRTWELCLLLLLGLGLGSQEA). An N-linked (GlcNAc...) asparagine glycan is attached at N78. Substrate is bound by residues R168, 175–176 (WD), N212, and 221–223 (RSQ). 2 N-linked (GlcNAc...) asparagine glycosylation sites follow: N239 and N261. Substrate is bound by residues 286–288 (RPE) and G319. The active-site Proton donor/acceptor is the D321. N-linked (GlcNAc...) asparagine glycosylation is present at N369. E514 functions as the Proton donor/acceptor in the catalytic mechanism. Residue E529 coordinates substrate. S556 carries GPI-anchor amidated serine lipidation. A propeptide spans 557 to 583 (GAKLAFLEPHCLAATLLPSLLLSLLPW) (removed in mature form).

The protein belongs to the glycosyl hydrolase 37 family. Homodimer; disulfide-linked. Expressed in kidney, liver and small intestine. Also more weakly expressed in pancreas.

It localises to the cell membrane. It catalyses the reaction alpha,alpha-trehalose + H2O = alpha-D-glucose + beta-D-glucose. In terms of biological role, intestinal trehalase is probably involved in the hydrolysis of ingested trehalose. This Homo sapiens (Human) protein is Trehalase.